The sequence spans 267 residues: Inositol-1-monophosphatase (267 aa).

Residues Glu-66, Asp-84, Leu-86, and Asp-87 each contribute to the Mg(2+) site. Glu-66 serves as a coordination point for substrate. Substrate contacts are provided by residues Leu-86 to Ser-89, Arg-182, and Asp-213. Asp-213 lines the Mg(2+) pocket.

The protein belongs to the inositol monophosphatase superfamily. Requires Mg(2+) as cofactor.

The catalysed reaction is a myo-inositol phosphate + H2O = myo-inositol + phosphate. The protein is Inositol-1-monophosphatase (suhB) of Aeropyrum pernix (strain ATCC 700893 / DSM 11879 / JCM 9820 / NBRC 100138 / K1).